The following is a 213-amino-acid chain: Probable RNA 2'-phosphotransferase (213 aa).

Belongs to the KptA/TPT1 family.

Functionally, removes the 2'-phosphate from RNA via an intermediate in which the phosphate is ADP-ribosylated by NAD followed by a presumed transesterification to release the RNA and generate ADP-ribose 1''-2''-cyclic phosphate (APPR&gt;P). May function as an ADP-ribosylase. This is Probable RNA 2'-phosphotransferase from Pyrobaculum aerophilum (strain ATCC 51768 / DSM 7523 / JCM 9630 / CIP 104966 / NBRC 100827 / IM2).